The chain runs to 285 residues: Non-homologous end joining protein Ku (285 aa).

Positions 9 to 176 constitute a Ku domain; the sequence is ISFGLVNVPV…PAEIRHLEAS (168 aa). The segment at 250 to 285 is disordered; sequence AMTDQKKQQNTAESETEEKPTKSTLTPRGRRKVKGA.

It belongs to the prokaryotic Ku family. In terms of assembly, homodimer. Interacts with LigD.

In terms of biological role, with LigD forms a non-homologous end joining (NHEJ) DNA repair enzyme, which repairs dsDNA breaks with reduced fidelity. Binds linear dsDNA with 5'- and 3'- overhangs but not closed circular dsDNA nor ssDNA. Recruits and stimulates the ligase activity of LigD. The chain is Non-homologous end joining protein Ku from Desulfitobacterium hafniense (strain DSM 10664 / DCB-2).